The chain runs to 290 residues: Endo-1,4-beta-xylanase B (290 aa).

The N-terminal stretch at 1-19 (MVSFNSLLVAVSAATCALA) is a signal peptide. The N-linked (GlcNAc...) asparagine glycan is linked to Asn26. The 189-residue stretch at 34–222 (QSTPAGTGTN…SSGSSTVTVN (189 aa)) folds into the GH11 domain. Glu118 functions as the Nucleophile in the catalytic mechanism. Glu209 (proton donor) is an active-site residue. The interval 223 to 248 (PAGGVTSPIAPTGPSSVSTTPSGPSS) is disordered. Over residues 234–248 (TGPSSVSTTPSGPSS) the composition is skewed to low complexity. The 36-residue stretch at 255-290 (TCSALYGQCGGQGWTGPTCCSSGTCKFSNNWYSQCL) folds into the CBM1 domain.

Belongs to the glycosyl hydrolase 11 (cellulase G) family.

The protein localises to the secreted. It carries out the reaction Endohydrolysis of (1-&gt;4)-beta-D-xylosidic linkages in xylans.. Its pathway is glycan degradation; xylan degradation. In terms of biological role, endo-1,4-beta-xylanase involved in the hydrolysis of xylan, a major structural heterogeneous polysaccharide found in plant biomass representing the second most abundant polysaccharide in the biosphere, after cellulose. In Phanerodontia chrysosporium (White-rot fungus), this protein is Endo-1,4-beta-xylanase B (xynB).